The following is a 272-amino-acid chain: Bis(5'-nucleosyl)-tetraphosphatase, symmetrical (272 aa).

This sequence belongs to the Ap4A hydrolase family.

The enzyme catalyses P(1),P(4)-bis(5'-adenosyl) tetraphosphate + H2O = 2 ADP + 2 H(+). Its function is as follows. Hydrolyzes diadenosine 5',5'''-P1,P4-tetraphosphate to yield ADP. The polypeptide is Bis(5'-nucleosyl)-tetraphosphatase, symmetrical (Ectopseudomonas mendocina (strain ymp) (Pseudomonas mendocina)).